Here is a 179-residue protein sequence, read N- to C-terminus: Ribosome maturation factor RimM (179 aa).

Residues 99-174 (EEDEYYFDQI…IMIVDLPEGL (76 aa)) form the PRC barrel domain.

The protein belongs to the RimM family. In terms of assembly, binds ribosomal protein uS19.

Its subcellular location is the cytoplasm. An accessory protein needed during the final step in the assembly of 30S ribosomal subunit, possibly for assembly of the head region. Essential for efficient processing of 16S rRNA. May be needed both before and after RbfA during the maturation of 16S rRNA. It has affinity for free ribosomal 30S subunits but not for 70S ribosomes. This Natranaerobius thermophilus (strain ATCC BAA-1301 / DSM 18059 / JW/NM-WN-LF) protein is Ribosome maturation factor RimM.